A 980-amino-acid chain; its full sequence is SLIT and NTRK-like protein 3 (980 aa).

The signal sequence occupies residues 1-27; sequence MMKPSIAEMLHRGRMLWIILLSTIALG. Residues 30–655 are Extracellular-facing; that stretch reads TPIPLIEDSE…SPPGGPVPLS (626 aa). N-linked (GlcNAc...) asparagine glycosylation is present at N69. LRR repeat units follow at residues 79 to 100, 103 to 124, 127 to 148, 151 to 172, 175 to 196, and 198 to 219; these read RPFK…SFLH, NAVS…AFNG, ILKR…TFLG, SLEY…AFRN, KLRV…LFKA, and SLTH…GMLD. Residues 233-284 form the LRRCT 1 domain; the sequence is NPWNCTCEIVQLKSWLERIPYTALVGDITCETPFHFHGKDLREIKKTELCPL. Residues 326-361 are disordered; it reads EYKSSNKQPKPTKQPRTPRPPSTSQALYPGPNQPPI. One can recognise an LRRNT domain in the interval 365–407; the sequence is QTRPPIPIICPTGCTCNLHINDLGLTVNCKERGFNNISELLPR. LRR repeat units follow at residues 410–431, 434–455, 458–479, 482–503, 506–527, and 529–550; these read NAKK…DFWN, SLDL…AFIN, NLKS…MFRG, SLHY…AFSL, NLKL…AFAG, and SLAR…GVLE. The region spanning 563–614 is the LRRCT 2 domain; sequence NPWDCTCDLVPFKQWIETISSVSVVGDVLCRTPENLTHRDVRTIELEVLCPE. N597 is a glycosylation site (N-linked (GlcNAc...) asparagine). The tract at residues 622-644 is disordered; sequence GPSPPQPGDYHPNGGPTSASPYE. The helical transmembrane segment at 656 to 676 threads the bilayer; that stretch reads VLILSLLVLFFSAVFVAAGLF. The Cytoplasmic segment spans residues 677–980; sequence AYVLRRRRKK…EVLEKTAYRF (304 aa). Disordered regions lie at residues 709 to 735 and 762 to 785; these read LFED…EKAP and EEEV…GTQP. Residues 715–725 show a composition bias toward gly residues; it reads GNSGGSGGGGR.

The protein belongs to the SLITRK family. Broadly expressed in embryonic brain with highest expression in cortical plate, pyramidal cell layer of the hippocampus, thalamus and hypothalamus.

Its subcellular location is the membrane. Suppresses neurite outgrowth. The protein is SLIT and NTRK-like protein 3 (Slitrk3) of Mus musculus (Mouse).